The sequence spans 854 residues: Espin (854 aa).

ANK repeat units lie at residues methionine 1–leucine 31, leucine 35–alanine 64, asparagine 69–aspartate 99, serine 103–alanine 133, methionine 137–alanine 167, asparagine 171–alanine 201, aspartate 205–glutamate 235, aspartate 239–alanine 268, and tryptophan 271–valine 300. A phosphoserine mark is found at serine 338 and serine 342. Over residues serine 338–glutamine 349 the composition is skewed to basic and acidic residues. Disordered stretches follow at residues serine 338 to serine 400, asparagine 415 to lysine 474, lysine 487 to glutamine 713, lysine 765 to alanine 788, and glutamate 800 to tyrosine 832. Polar residues predominate over residues serine 352–leucine 377. A compositionally biased stretch (low complexity) spans serine 378–serine 389. Residues proline 428–glycine 463 show a composition bias toward pro residues. Basic and acidic residues predominate over residues lysine 487–arginine 505. Serine 515 bears the Phosphoserine mark. Pro residues predominate over residues leucine 595–proline 620. Residues serine 633–serine 642 are compositionally biased toward low complexity. Polar residues-rich tracts occupy residues phenylalanine 643–asparagine 652 and proline 667–phenylalanine 678. Serine 647 is subject to Phosphoserine. A WH2 domain is found at aspartate 651–threonine 668. 2 positions are modified to phosphoserine: serine 690 and serine 696. Low complexity predominate over residues leucine 692–arginine 703. Residues glutamine 756–leucine 830 adopt a coiled-coil conformation.

Monomer. Binds F-actin in a Ca(2+)-resistant fashion. Interacts (via N-terminus) with BAIAP2 (via SH3-domain). Interacts with PFN2. Interacts with MYO3A (via C-terminus). Interacts with MYO3B (via C-terminus).

The protein resides in the cytoplasm. The protein localises to the cytoskeleton. Its subcellular location is the cell projection. It localises to the stereocilium. It is found in the microvillus. Multifunctional actin-bundling protein. Plays a major role in regulating the organization, dimension, dynamics and signaling capacities of the actin filament-rich microvilli in the mechanosensory and chemosensory cells. Required for the assembly and stabilization of the stereociliary parallel actin bundles. Plays a crucial role in the formation and maintenance of inner ear hair cell stereocilia. Involved in the elongation of actin in stereocilia. In extrastriolar hair cells, required for targeting MYO3B to stereocilia tips, and for regulation of stereocilia diameter and staircase formation. In Homo sapiens (Human), this protein is Espin (ESPN).